A 740-amino-acid polypeptide reads, in one-letter code: Elongation factor 2 (740 aa).

The region spanning 23-264 (AQIRNAGTLA…MIIEHVPPPN (242 aa)) is the tr-type G domain. Residues 32–39 (AHVDHGKT), 98–102 (DTPGH), and 152–155 (NKID) contribute to the GTP site. His605 carries the diphthamide modification.

Belongs to the TRAFAC class translation factor GTPase superfamily. Classic translation factor GTPase family. EF-G/EF-2 subfamily.

The protein localises to the cytoplasm. Its function is as follows. Catalyzes the GTP-dependent ribosomal translocation step during translation elongation. During this step, the ribosome changes from the pre-translocational (PRE) to the post-translocational (POST) state as the newly formed A-site-bound peptidyl-tRNA and P-site-bound deacylated tRNA move to the P and E sites, respectively. Catalyzes the coordinated movement of the two tRNA molecules, the mRNA and conformational changes in the ribosome. This chain is Elongation factor 2, found in Pyrobaculum arsenaticum (strain DSM 13514 / JCM 11321 / PZ6).